We begin with the raw amino-acid sequence, 83 residues long: Exodeoxyribonuclease 7 small subunit (83 aa).

The protein belongs to the XseB family. As to quaternary structure, heterooligomer composed of large and small subunits.

Its subcellular location is the cytoplasm. The enzyme catalyses Exonucleolytic cleavage in either 5'- to 3'- or 3'- to 5'-direction to yield nucleoside 5'-phosphates.. In terms of biological role, bidirectionally degrades single-stranded DNA into large acid-insoluble oligonucleotides, which are then degraded further into small acid-soluble oligonucleotides. This is Exodeoxyribonuclease 7 small subunit from Bradyrhizobium sp. (strain BTAi1 / ATCC BAA-1182).